The sequence spans 170 residues: Centrin-2 (170 aa).

The segment at 1-21 (MQRGALRGASPTARRRLVDRP) is disordered. 4 EF-hand domains span residues 26 to 61 (DEIE…LGFE), 62 to 97 (TKNP…KLGD), 99 to 134 (ESRE…LGET), and 135 to 170 (MSED…KTFP). Ca(2+)-binding residues include Asp-39, Asp-41, Ser-43, Met-45, and Glu-50.

It belongs to the centrin family. In terms of assembly, monomer. Does not homooligomerize.

It is found in the cytoplasm. It localises to the cytoskeleton. The protein resides in the microtubule organizing center. Its subcellular location is the centrosome. In tachyzoites, plays an essential role in microneme secretion that ensures parasite motility and attachment to, invasion of and egress from host cells. Also involved in the architecture of the peripheral annuli where it appears to regulate the localization of PAP2. In association with the myosin motor MyoJ, involved in the constriction of the basal complex at the end of daughter cell division in an actin-dependent manner; the basal complex is a cytoskeletal structure formed at the tachyzoite basal pole during daughter cell formation. May be involved in parasite replication. This Toxoplasma gondii (strain ATCC 50611 / Me49) protein is Centrin-2.